We begin with the raw amino-acid sequence, 530 residues long: Bifunctional purine biosynthesis protein PurH (530 aa).

The region spanning 1 to 148 is the MGS-like domain; sequence MNNARPIRRA…KNHKDVTIVV (148 aa).

It belongs to the PurH family.

It carries out the reaction (6R)-10-formyltetrahydrofolate + 5-amino-1-(5-phospho-beta-D-ribosyl)imidazole-4-carboxamide = 5-formamido-1-(5-phospho-D-ribosyl)imidazole-4-carboxamide + (6S)-5,6,7,8-tetrahydrofolate. The enzyme catalyses IMP + H2O = 5-formamido-1-(5-phospho-D-ribosyl)imidazole-4-carboxamide. The protein operates within purine metabolism; IMP biosynthesis via de novo pathway; 5-formamido-1-(5-phospho-D-ribosyl)imidazole-4-carboxamide from 5-amino-1-(5-phospho-D-ribosyl)imidazole-4-carboxamide (10-formyl THF route): step 1/1. It functions in the pathway purine metabolism; IMP biosynthesis via de novo pathway; IMP from 5-formamido-1-(5-phospho-D-ribosyl)imidazole-4-carboxamide: step 1/1. This chain is Bifunctional purine biosynthesis protein PurH, found in Vibrio parahaemolyticus serotype O3:K6 (strain RIMD 2210633).